A 270-amino-acid chain; its full sequence is Glutamate 5-kinase (270 aa).

Lysine 15 is an ATP binding site. Residues serine 55, aspartate 142, and asparagine 158 each contribute to the substrate site. ATP-binding positions include 178 to 179 and 220 to 226; these read SD and TGGMLSK.

The protein belongs to the glutamate 5-kinase family.

It is found in the cytoplasm. It carries out the reaction L-glutamate + ATP = L-glutamyl 5-phosphate + ADP. It functions in the pathway amino-acid biosynthesis; L-proline biosynthesis; L-glutamate 5-semialdehyde from L-glutamate: step 1/2. Functionally, catalyzes the transfer of a phosphate group to glutamate to form L-glutamate 5-phosphate. This chain is Glutamate 5-kinase, found in Streptococcus uberis (strain ATCC BAA-854 / 0140J).